Reading from the N-terminus, the 470-residue chain is Nuclear receptor ROR-beta (470 aa).

Positions 18–93 form a DNA-binding region, nuclear receptor; that stretch reads VIPCKICGDK…LGMSRDAVKF (76 aa). 2 consecutive NR C4-type zinc fingers follow at residues 21–41 and 57–81; these read CKIC…CEGC and CPRQ…LQKC. A compositionally biased stretch (basic and acidic residues) spans 104-117; that stretch reads LYAEVQKHQQRLQE. The tract at residues 104 to 127 is disordered; the sequence is LYAEVQKHQQRLQEQRQQQSGEAE. The NR LBD domain maps to 222–460; that stretch reads EIDRIAQNII…TLFPPLYKEL (239 aa). An AF-2 motif is present at residues 456–461; it reads LYKELF.

Belongs to the nuclear hormone receptor family. NR1 subfamily. In terms of assembly, monomer. Interacts with CRX. Expressed in inner and outer neuroblastic layer as well as in the ganglion cell layer of the developing retina. Expressed in bone marrow osteoprogenitor cells.

It localises to the nucleus. It is found in the nucleoplasm. Nuclear receptor that binds DNA as a monomer to ROR response elements (RORE) containing a single core motif half-site 5'-AGGTCA-3' preceded by a short A-T-rich sequence. Considered to have intrinsic transcriptional activity, have some natural ligands such as all-trans retinoic acid (ATRA) and other retinoids which act as inverse agonists repressing the transcriptional activity. Required for normal postnatal development of rod and cone photoreceptor cells. Modulates rod photoreceptors differentiation at least by inducing the transcription factor NRL-mediated pathway. In cone photoreceptor cells, regulates transcription of OPN1SW. Involved in the regulation of the period length and stability of the circadian rhythm. May control cytoarchitectural patterning of neocortical neurons during development. May act in a dose-dependent manner to regulate barrel formation upon innervation of layer IV neurons by thalamocortical axons. May play a role in the suppression of osteoblastic differentiation through the inhibition of RUNX2 transcriptional activity. Its function is as follows. Isoform 1 is critical for hindlimb motor control and for the differentiation of amacrine and horizontal cells in the retina. Regulates the expression of PTF1A synergistically with FOXN4. This chain is Nuclear receptor ROR-beta (Rorb), found in Mus musculus (Mouse).